The sequence spans 345 residues: Photosystem II protein D1 (345 aa).

3 helical membrane-spanning segments follow: residues 30–47, 119–134, and 143–157; these read YVGW…TAAT, HFFI…EWEL, and WIAV…AASA. H119 provides a ligand contact to chlorophyll a. Y127 provides a ligand contact to pheophytin a. Residues D171 and E190 each coordinate [CaMn4O5] cluster. A helical membrane pass occupies residues 198–219; that stretch reads FHMLGVAGVFGGSLFSAMHGSL. Chlorophyll a is bound at residue H199. A quinone is bound by residues H216 and 265-266; that span reads SF. H216 contacts Fe cation. H273 lines the Fe cation pocket. The chain crosses the membrane as a helical span at residues 275–289; it reads FLAVWPVVGIWFTAL. Positions 333, 334, 343, and 345 each coordinate [CaMn4O5] cluster.

This sequence belongs to the reaction center PufL/M/PsbA/D family. PSII is composed of 1 copy each of membrane proteins PsbA, PsbB, PsbC, PsbD, PsbE, PsbF, PsbH, PsbI, PsbJ, PsbK, PsbL, PsbM, PsbT, PsbY, PsbZ, Psb30/Ycf12, at least 3 peripheral proteins of the oxygen-evolving complex and a large number of cofactors. It forms dimeric complexes. The D1/D2 heterodimer binds P680, chlorophylls that are the primary electron donor of PSII, and subsequent electron acceptors. It shares a non-heme iron and each subunit binds pheophytin, quinone, additional chlorophylls, carotenoids and lipids. D1 provides most of the ligands for the Mn4-Ca-O5 cluster of the oxygen-evolving complex (OEC). There is also a Cl(-1) ion associated with D1 and D2, which is required for oxygen evolution. The PSII complex binds additional chlorophylls, carotenoids and specific lipids. serves as cofactor. In terms of processing, tyr-162 forms a radical intermediate that is referred to as redox-active TyrZ, YZ or Y-Z.

The protein localises to the plastid. The protein resides in the chloroplast thylakoid membrane. The enzyme catalyses 2 a plastoquinone + 4 hnu + 2 H2O = 2 a plastoquinol + O2. Functionally, photosystem II (PSII) is a light-driven water:plastoquinone oxidoreductase that uses light energy to abstract electrons from H(2)O, generating O(2) and a proton gradient subsequently used for ATP formation. It consists of a core antenna complex that captures photons, and an electron transfer chain that converts photonic excitation into a charge separation. The D1/D2 (PsbA/PsbD) reaction center heterodimer binds P680, the primary electron donor of PSII as well as several subsequent electron acceptors. This is Photosystem II protein D1 from Euglena gracilis.